Reading from the N-terminus, the 65-residue chain is Large ribosomal subunit protein bL35 (65 aa).

This sequence belongs to the bacterial ribosomal protein bL35 family.

In Desulforapulum autotrophicum (strain ATCC 43914 / DSM 3382 / VKM B-1955 / HRM2) (Desulfobacterium autotrophicum), this protein is Large ribosomal subunit protein bL35.